A 175-amino-acid chain; its full sequence is DM domain-containing protein mab-23 (175 aa).

The DM DNA-binding region spans 8–56 (CQLCANHGIFNQPKKGHKQKCPYRTCPCSLCALNTKRRALDQIERQLKH). Residues 58 to 93 (NEPMTGQTATSMASPTPECPLSPTTPKMTPHTPTSG) are disordered. Polar residues predominate over residues 59 to 71 (EPMTGQTATSMAS). Low complexity predominate over residues 81-91 (TTPKMTPHTPT).

Expressed in a limited number of non-sex-specific tissues in males, including 6-8 unidentified neurons of the head, ventral body wall muscle, and the PHCL/R neurons.

Its subcellular location is the nucleus. In terms of biological role, probable transcription factor that plays a role in the development of the dopaminergic neurons of the male-specific genital sensilla (simple sense organs) known as rays, by negatively regulating the activity of the transcription factor ast-1. Involved in male mating behavior, probably as a result of a role in the differentiation of male-specific diagonal muscles. Required for development of the male proctodeum. May be dispensable in hermaphrodites. The protein is DM domain-containing protein mab-23 of Caenorhabditis elegans.